The sequence spans 112 residues: DNA-binding protein TK1278 (112 aa).

Belongs to the PDCD5 family.

The polypeptide is DNA-binding protein TK1278 (Thermococcus kodakarensis (strain ATCC BAA-918 / JCM 12380 / KOD1) (Pyrococcus kodakaraensis (strain KOD1))).